A 407-amino-acid polypeptide reads, in one-letter code: Imidazolonepropionase (407 aa).

Positions 68 and 70 each coordinate Fe(3+). Zn(2+) contacts are provided by His-68 and His-70. Arg-77, Tyr-140, and His-173 together coordinate 4-imidazolone-5-propanoate. Residue Tyr-140 coordinates N-formimidoyl-L-glutamate. His-238 serves as a coordination point for Fe(3+). A Zn(2+)-binding site is contributed by His-238. Gln-241 provides a ligand contact to 4-imidazolone-5-propanoate. Asp-313 provides a ligand contact to Fe(3+). Position 313 (Asp-313) interacts with Zn(2+). N-formimidoyl-L-glutamate contacts are provided by Asn-315 and Gly-317. 4-imidazolone-5-propanoate is bound at residue Thr-318.

Belongs to the metallo-dependent hydrolases superfamily. HutI family. Zn(2+) serves as cofactor. Requires Fe(3+) as cofactor.

It is found in the cytoplasm. The enzyme catalyses 4-imidazolone-5-propanoate + H2O = N-formimidoyl-L-glutamate. The protein operates within amino-acid degradation; L-histidine degradation into L-glutamate; N-formimidoyl-L-glutamate from L-histidine: step 3/3. Its function is as follows. Catalyzes the hydrolytic cleavage of the carbon-nitrogen bond in imidazolone-5-propanoate to yield N-formimidoyl-L-glutamate. It is the third step in the universal histidine degradation pathway. The protein is Imidazolonepropionase of Burkholderia cenocepacia (strain ATCC BAA-245 / DSM 16553 / LMG 16656 / NCTC 13227 / J2315 / CF5610) (Burkholderia cepacia (strain J2315)).